The chain runs to 112 residues: Colipase (112 aa).

Residues 1 to 17 (MKVLVVLLVTLVAVAYA) form the signal peptide. The propeptide at 18-22 (APGPR) is enterostatin, activation peptide. Intrachain disulfides connect Cys-34-Cys-45, Cys-40-Cys-56, Cys-44-Cys-78, Cys-66-Cys-86, and Cys-80-Cys-104.

The protein belongs to the colipase family. Forms a 1:1 stoichiometric complex with pancreatic lipase. In terms of tissue distribution, expressed by the pancreas.

It localises to the secreted. Functionally, colipase is a cofactor of pancreatic lipase. It allows the lipase to anchor itself to the lipid-water interface. Without colipase the enzyme is washed off by bile salts, which have an inhibitory effect on the lipase. Its function is as follows. Enterostatin has a biological activity as a satiety signal. In Rattus norvegicus (Rat), this protein is Colipase.